We begin with the raw amino-acid sequence, 453 residues long: Bifunctional protein GlmU (453 aa).

A pyrophosphorylase region spans residues 1–225 (MNIVILAAGT…EWETLGVNSK (225 aa)). UDP-N-acetyl-alpha-D-glucosamine contacts are provided by residues 6 to 9 (LAAG), Lys20, Gln71, 76 to 77 (GT), 98 to 100 (YGD), Gly135, Glu150, Asn165, and Asn223. Asp100 lines the Mg(2+) pocket. Asn223 is a binding site for Mg(2+). The tract at residues 226-246 (QQLAELERIHQRNVADALLVA) is linker. The N-acetyltransferase stretch occupies residues 247 to 453 (GVTLADPARL…GYVRPTKKKS (207 aa)). Positions 329 and 347 each coordinate UDP-N-acetyl-alpha-D-glucosamine. The active-site Proton acceptor is the His359. UDP-N-acetyl-alpha-D-glucosamine is bound by residues Tyr362 and Asn373. Residues Ala376, 382 to 383 (NY), Ser401, and Ala419 contribute to the acetyl-CoA site.

The protein in the N-terminal section; belongs to the N-acetylglucosamine-1-phosphate uridyltransferase family. It in the C-terminal section; belongs to the transferase hexapeptide repeat family. In terms of assembly, homotrimer. It depends on Mg(2+) as a cofactor.

The protein resides in the cytoplasm. The enzyme catalyses alpha-D-glucosamine 1-phosphate + acetyl-CoA = N-acetyl-alpha-D-glucosamine 1-phosphate + CoA + H(+). It catalyses the reaction N-acetyl-alpha-D-glucosamine 1-phosphate + UTP + H(+) = UDP-N-acetyl-alpha-D-glucosamine + diphosphate. Its pathway is nucleotide-sugar biosynthesis; UDP-N-acetyl-alpha-D-glucosamine biosynthesis; N-acetyl-alpha-D-glucosamine 1-phosphate from alpha-D-glucosamine 6-phosphate (route II): step 2/2. It participates in nucleotide-sugar biosynthesis; UDP-N-acetyl-alpha-D-glucosamine biosynthesis; UDP-N-acetyl-alpha-D-glucosamine from N-acetyl-alpha-D-glucosamine 1-phosphate: step 1/1. It functions in the pathway bacterial outer membrane biogenesis; LPS lipid A biosynthesis. Functionally, catalyzes the last two sequential reactions in the de novo biosynthetic pathway for UDP-N-acetylglucosamine (UDP-GlcNAc). The C-terminal domain catalyzes the transfer of acetyl group from acetyl coenzyme A to glucosamine-1-phosphate (GlcN-1-P) to produce N-acetylglucosamine-1-phosphate (GlcNAc-1-P), which is converted into UDP-GlcNAc by the transfer of uridine 5-monophosphate (from uridine 5-triphosphate), a reaction catalyzed by the N-terminal domain. This Paraburkholderia xenovorans (strain LB400) protein is Bifunctional protein GlmU.